A 606-amino-acid chain; its full sequence is Aspartate--tRNA(Asp/Asn) ligase (606 aa).

Glu177 contributes to the L-aspartate binding site. The segment at 201–204 (QIFK) is aspartate. L-aspartate is bound at residue Arg223. ATP-binding positions include 223 to 225 (RDE) and Gln232. His461 is an L-aspartate binding site. Glu499 lines the ATP pocket. Arg506 lines the L-aspartate pocket. 551 to 554 (GLDR) contacts ATP.

The protein belongs to the class-II aminoacyl-tRNA synthetase family. Type 1 subfamily. As to quaternary structure, homodimer.

It is found in the cytoplasm. The enzyme catalyses tRNA(Asx) + L-aspartate + ATP = L-aspartyl-tRNA(Asx) + AMP + diphosphate. In terms of biological role, aspartyl-tRNA synthetase with relaxed tRNA specificity since it is able to aspartylate not only its cognate tRNA(Asp) but also tRNA(Asn). Reaction proceeds in two steps: L-aspartate is first activated by ATP to form Asp-AMP and then transferred to the acceptor end of tRNA(Asp/Asn). In Prochlorococcus marinus (strain MIT 9211), this protein is Aspartate--tRNA(Asp/Asn) ligase.